Here is a 98-residue protein sequence, read N- to C-terminus: NADH-ubiquinone oxidoreductase chain 4L (98 aa).

3 helical membrane passes run 2–22, 29–49, and 61–81; these read PPIF…TLIF, SLLC…LIIL, and ILLL…LVMV.

It belongs to the complex I subunit 4L family. Core subunit of respiratory chain NADH dehydrogenase (Complex I) which is composed of 45 different subunits.

The protein resides in the mitochondrion inner membrane. It catalyses the reaction a ubiquinone + NADH + 5 H(+)(in) = a ubiquinol + NAD(+) + 4 H(+)(out). Functionally, core subunit of the mitochondrial membrane respiratory chain NADH dehydrogenase (Complex I) which catalyzes electron transfer from NADH through the respiratory chain, using ubiquinone as an electron acceptor. Part of the enzyme membrane arm which is embedded in the lipid bilayer and involved in proton translocation. The sequence is that of NADH-ubiquinone oxidoreductase chain 4L (MT-ND4L) from Avahi unicolor (Sambirano woolly lemur).